Consider the following 875-residue polypeptide: MASLDLPYRCPRCGEHKRFRSLSSLRAHLEYSHTYETLYILSKTNSICDGAAAAAAAAAAASGFPLAPEPAALLAVPGARREVFESTSFQGKEQAAGPSPAAPHLLHHHHHHAPLAHFPGDLVPASLPCEELAEPGLVPAAAARYALREIEIPLGELFARKSVASSACSTPPPGPGPGPCPGPASASPASPSPADVAYEEGLARLKIRALEKLEVDRRLERLSEEVEQKIAGQVGRLQAELERKAAELETARQESARLGREKEELEERASELSRQVDVSVELLASLKQDLVHKEQELSRKQQEVVQIDQFLKETAAREASAKLRLQQFIEELLERADRAERQLQVISSSCGSTPSASLGRGGGGGGAGPNARGPGRMREHHVGPAVPNTYAVSRHGSSPSTGASSRVPAASQSSGCYDSDSLELPRPEEGAPEDSGPGGLGTRAQAANGGSERSQPPRSSGLRRQAIQNWQRRPRRHSTEGEEGDVSDVGSRTTESEAEGPLDAPRPGPAMAGPLSSCRLSARPEGGSGRGRRAERVSPSRSNEVISPEILKMRAALFCIFTYLDTRTLLHAAEVCRDWRFVARHPAVWTRVLLENARVCSKFLAMLAQWCTQAHSLTLQNLKPRQRGKKESKEEYARSTRGCLEAGLESLLKAAGGNLLILRISHCPNILTDRSLWLASCYCRALQAVTYRSATDPVGHEVIWALGAGCREIVSLQVAPLHPCQQPTRFSNRCLQMIGRCWPHLRALGVGGAGCGVQGLASLARNCMRLQVLELDHVSEITQEVAAEVCREGLKGLEMLVLTATPVTPKALLHFNSICRNLKSIVVQIGIADYFKEPSSPEAQKLFEDMVTKLQALRRRPGFSKILHIKVEGGC.

Disordered regions lie at residues 85–110 (ESTS…HHHH), 165–194 (SSAC…PSPA), and 347–542 (SSSC…PSRS). A compositionally biased stretch (pro residues) spans 170–182 (TPPPGPGPGPCPG). The span at 183 to 194 (PASASPASPSPA) shows a compositional bias: low complexity. A coiled-coil region spans residues 209–351 (ALEKLEVDRR…QLQVISSSCG (143 aa)). Residues 347-356 (SSSCGSTPSA) are compositionally biased toward polar residues. Residues 359–368 (GRGGGGGGAG) are compositionally biased toward gly residues. R360 carries the omega-N-methylarginine modification. The span at 395–416 (HGSSPSTGASSRVPAASQSSGC) shows a compositional bias: polar residues. At S478 the chain carries Phosphoserine. T479 is subject to Phosphothreonine. Residues 496–540 (SEAEGPLDAPRPGPAMAGPLSSCRLSARPEGGSGRGRRAERVSPS) form the F-box domain. S762 carries the phosphoserine modification.

As to quaternary structure, directly interacts with SKP1 and CUL1.

Functionally, substrate-recognition component of the SCF (SKP1-CUL1-F-box protein)-type E3 ubiquitin ligase complex. This chain is F-box only protein 41 (FBXO41), found in Homo sapiens (Human).